The chain runs to 396 residues: Alpha-1-antitrypsin (396 aa).

The first 2 residues, H1 to V2, serve as a signal peptide directing secretion. Residues H1–T24 form a disordered region. A compositionally biased stretch (basic and acidic residues) spans D14–T24. At S16 the chain carries Phosphoserine. Residues N48, N85, N123, and N249 are each glycosylated (N-linked (GlcNAc...) asparagine). Residues G351–K370 are RCL. S361 carries the phosphoserine modification.

This sequence belongs to the serpin family. Interacts with CELA2A. Interacts with ERGIC3 and LMAN1/ERGIC53. Interacts with PRSS1/Trypsin. In terms of tissue distribution, plasma.

Its subcellular location is the secreted. In terms of biological role, inhibitor of serine proteases. Its primary target is elastase, but it also has a moderate affinity for plasmin and thrombin. Inhibits trypsin, chymotrypsin and plasminogen activator. In Chlorocebus aethiops (Green monkey), this protein is Alpha-1-antitrypsin (SERPINA1).